Consider the following 263-residue polypeptide: Glucosamine-6-phosphate deaminase (263 aa).

Asp72 (proton acceptor; for enolization step) is an active-site residue. Asp141 (for ring-opening step) is an active-site residue. The active-site Proton acceptor; for ring-opening step is His143. Residue Glu148 is the For ring-opening step of the active site.

The protein belongs to the glucosamine/galactosamine-6-phosphate isomerase family. NagB subfamily.

It carries out the reaction alpha-D-glucosamine 6-phosphate + H2O = beta-D-fructose 6-phosphate + NH4(+). Its pathway is amino-sugar metabolism; N-acetylneuraminate degradation; D-fructose 6-phosphate from N-acetylneuraminate: step 5/5. Allosterically activated by N-acetylglucosamine 6-phosphate (GlcNAc6P). Functionally, catalyzes the reversible isomerization-deamination of glucosamine 6-phosphate (GlcN6P) to form fructose 6-phosphate (Fru6P) and ammonium ion. This chain is Glucosamine-6-phosphate deaminase, found in Phocaeicola vulgatus (strain ATCC 8482 / DSM 1447 / JCM 5826 / CCUG 4940 / NBRC 14291 / NCTC 11154) (Bacteroides vulgatus).